The following is a 139-amino-acid chain: Interleukin-5 (139 aa).

The N-terminal stretch at 1–19 is a signal peptide; it reads MMKILVCLPLLTLYAGCVY. N-linked (GlcNAc...) asparagine glycosylation is found at N48, N77, and N91.

It belongs to the IL-5 family. In terms of assembly, homodimer; disulfide-linked. Interacts with IL5RA. Interacts with CSF2RB.

The protein resides in the secreted. Functionally, homodimeric cytokine expressed predominantly by T-lymphocytes and NK cells that plays an important role in the survival, differentiation, and chemotaxis of eosinophils. Also acts on activated and resting B-cells to induce immunoglobulin production, growth, and differentiation. Mechanistically, exerts its biological effects through a receptor composed of IL5RA subunit and the cytokine receptor common subunit beta/CSF2RB. Binding to the receptor leads to activation of various kinases including LYN, SYK and JAK2 and thereby propagates signals through the RAS-MAPK and JAK-STAT5 pathways respectively. This chain is Interleukin-5 (IL5), found in Notamacropus eugenii (Tammar wallaby).